Consider the following 272-residue polypeptide: DNA repair protein RecO (272 aa).

Belongs to the RecO family.

Its function is as follows. Involved in DNA repair and RecF pathway recombination. This is DNA repair protein RecO from Latilactobacillus sakei subsp. sakei (strain 23K) (Lactobacillus sakei subsp. sakei).